Consider the following 365-residue polypeptide: Flagellar P-ring protein (365 aa).

The first 19 residues, 1 to 19 (MIKFLSTFMLLLVTTVVQA), serve as a signal peptide directing secretion.

It belongs to the FlgI family. As to quaternary structure, the basal body constitutes a major portion of the flagellar organelle and consists of four rings (L,P,S, and M) mounted on a central rod.

It is found in the periplasm. The protein resides in the bacterial flagellum basal body. Assembles around the rod to form the L-ring and probably protects the motor/basal body from shearing forces during rotation. The protein is Flagellar P-ring protein of Escherichia fergusonii (strain ATCC 35469 / DSM 13698 / CCUG 18766 / IAM 14443 / JCM 21226 / LMG 7866 / NBRC 102419 / NCTC 12128 / CDC 0568-73).